Consider the following 247-residue polypeptide: Potassium channel Ftrac_2467 (247 aa).

Helical transmembrane passes span 23–44, 56–78, 89–117, 142–165, 187–210, and 215–237; these read TRIE…VLSS, SMRD…YQHY, KVTI…RFLS, LKLL…LMYW, SIIA…IDPW, and TTIL…GRIT. A RxxxFSD motif motif is present at residues 24–30; the sequence is RIETFSD.

This sequence belongs to the TMEM175 family. As to quaternary structure, homotetramer.

The protein resides in the cell membrane. The enzyme catalyses K(+)(in) = K(+)(out). Potassium channel; forms a potassium-permeable leak-like channel with weak selectivity for potassium. The channel is permeable for K(+), Rb(+) and Cs(+). This chain is Potassium channel Ftrac_2467, found in Marivirga tractuosa (strain ATCC 23168 / DSM 4126 / NBRC 15989 / NCIMB 1408 / VKM B-1430 / H-43) (Microscilla tractuosa).